The primary structure comprises 410 residues: LL-diaminopimelate aminotransferase (410 aa).

Substrate contacts are provided by tyrosine 15 and glycine 42. Residues tyrosine 72, 108 to 109, tyrosine 132, asparagine 187, tyrosine 218, and 246 to 248 each bind pyridoxal 5'-phosphate; these read SK and SFS. Residues lysine 109, tyrosine 132, and asparagine 187 each contribute to the substrate site. Lysine 249 is modified (N6-(pyridoxal phosphate)lysine). Arginine 257 and asparagine 292 together coordinate pyridoxal 5'-phosphate. Residues asparagine 292 and arginine 388 each coordinate substrate.

It belongs to the class-I pyridoxal-phosphate-dependent aminotransferase family. LL-diaminopimelate aminotransferase subfamily. Homodimer. It depends on pyridoxal 5'-phosphate as a cofactor.

The enzyme catalyses (2S,6S)-2,6-diaminopimelate + 2-oxoglutarate = (S)-2,3,4,5-tetrahydrodipicolinate + L-glutamate + H2O + H(+). It participates in amino-acid biosynthesis; L-lysine biosynthesis via DAP pathway; LL-2,6-diaminopimelate from (S)-tetrahydrodipicolinate (aminotransferase route): step 1/1. In terms of biological role, involved in the synthesis of meso-diaminopimelate (m-DAP or DL-DAP), required for both lysine and peptidoglycan biosynthesis. Catalyzes the direct conversion of tetrahydrodipicolinate to LL-diaminopimelate. This is LL-diaminopimelate aminotransferase from Syntrophotalea carbinolica (strain DSM 2380 / NBRC 103641 / GraBd1) (Pelobacter carbinolicus).